A 372-amino-acid chain; its full sequence is Glutamate 5-kinase (372 aa).

Lysine 14 is a binding site for ATP. Positions 54, 141, and 153 each coordinate substrate. ATP contacts are provided by residues 173–174 and 215–221; these read TD and TGGMSTK. The 79-residue stretch at 280–358 folds into the PUA domain; sequence QGSLVLDAGA…DEIESVLGYD (79 aa).

This sequence belongs to the glutamate 5-kinase family.

Its subcellular location is the cytoplasm. The catalysed reaction is L-glutamate + ATP = L-glutamyl 5-phosphate + ADP. Its pathway is amino-acid biosynthesis; L-proline biosynthesis; L-glutamate 5-semialdehyde from L-glutamate: step 1/2. Functionally, catalyzes the transfer of a phosphate group to glutamate to form L-glutamate 5-phosphate. The sequence is that of Glutamate 5-kinase from Shewanella oneidensis (strain ATCC 700550 / JCM 31522 / CIP 106686 / LMG 19005 / NCIMB 14063 / MR-1).